The chain runs to 157 residues: SsrA-binding protein (157 aa).

Residues 133–157 (LHDKRETAKERDWQRDKARLMRDKG) are disordered. A compositionally biased stretch (basic and acidic residues) spans 135-157 (DKRETAKERDWQRDKARLMRDKG).

It belongs to the SmpB family.

The protein resides in the cytoplasm. Its function is as follows. Required for rescue of stalled ribosomes mediated by trans-translation. Binds to transfer-messenger RNA (tmRNA), required for stable association of tmRNA with ribosomes. tmRNA and SmpB together mimic tRNA shape, replacing the anticodon stem-loop with SmpB. tmRNA is encoded by the ssrA gene; the 2 termini fold to resemble tRNA(Ala) and it encodes a 'tag peptide', a short internal open reading frame. During trans-translation Ala-aminoacylated tmRNA acts like a tRNA, entering the A-site of stalled ribosomes, displacing the stalled mRNA. The ribosome then switches to translate the ORF on the tmRNA; the nascent peptide is terminated with the 'tag peptide' encoded by the tmRNA and targeted for degradation. The ribosome is freed to recommence translation, which seems to be the essential function of trans-translation. In Methylobacterium sp. (strain 4-46), this protein is SsrA-binding protein.